The following is a 509-amino-acid chain: Maturase K (509 aa).

It belongs to the intron maturase 2 family. MatK subfamily.

It is found in the plastid. Its subcellular location is the chloroplast. In terms of biological role, usually encoded in the trnK tRNA gene intron. Probably assists in splicing its own and other chloroplast group II introns. This Nicotiana rustica (Aztec tobacco) protein is Maturase K.